The chain runs to 338 residues: 1-aminocyclopropane-1-carboxylate deaminase (338 aa).

K51 carries the post-translational modification N6-(pyridoxal phosphate)lysine. The active-site Nucleophile is the S78.

It belongs to the ACC deaminase/D-cysteine desulfhydrase family. As to quaternary structure, homotrimer. Pyridoxal 5'-phosphate serves as cofactor.

It catalyses the reaction 1-aminocyclopropane-1-carboxylate + H2O = 2-oxobutanoate + NH4(+). Catalyzes a cyclopropane ring-opening reaction, the irreversible conversion of 1-aminocyclopropane-1-carboxylate (ACC) to ammonia and alpha-ketobutyrate. Allows growth on ACC as a nitrogen source. The polypeptide is 1-aminocyclopropane-1-carboxylate deaminase (Pseudomonas syringae pv. tomato (strain ATCC BAA-871 / DC3000)).